Consider the following 345-residue polypeptide: Cuticle collagen 14 (345 aa).

Triple-helical region stretches follow at residues 156-185 (GPPG…PGPP), 207-263 (GDGG…PGTY), and 268-333 (GPAG…PGSC). A disordered region spans residues 161 to 345 (AGDGGRDGAD…CPPARLAPGY (185 aa)). Pro residues-rich tracts occupy residues 179 to 191 (IGPP…PGPD), 198 to 223 (PQCP…PPGA), and 278 to 290 (RPGP…PAGP). Positions 292-304 (GENGKGGGQGPSG) are enriched in gly residues.

The protein belongs to the cuticular collagen family. In terms of assembly, collagen polypeptide chains are complexed within the cuticle by disulfide bonds and other types of covalent cross-links.

Its function is as follows. Nematode cuticles are composed largely of collagen-like proteins. The cuticle functions both as an exoskeleton and as a barrier to protect the worm from its environment. The polypeptide is Cuticle collagen 14 (col-14) (Caenorhabditis elegans).